Reading from the N-terminus, the 71-residue chain is DNA-directed RNA polymerase subunit omega (71 aa).

Belongs to the RNA polymerase subunit omega family. In terms of assembly, the RNAP catalytic core consists of 2 alpha, 1 beta, 1 beta' and 1 omega subunit. When a sigma factor is associated with the core the holoenzyme is formed, which can initiate transcription.

The enzyme catalyses RNA(n) + a ribonucleoside 5'-triphosphate = RNA(n+1) + diphosphate. Promotes RNA polymerase assembly. Latches the N- and C-terminal regions of the beta' subunit thereby facilitating its interaction with the beta and alpha subunits. The chain is DNA-directed RNA polymerase subunit omega from Campylobacter curvus (strain 525.92).